A 213-amino-acid chain; its full sequence is Histone H1 (213 aa).

The segment covering 1-25 (MAAATASAAATPAKKAAPKKPAAAP) has biased composition (low complexity). Disordered stretches follow at residues 1-30 (MAAA…HPSY) and 81-213 (GEFV…AKSS). The H15 domain occupies 26 to 97 (EHPSYKEMLT…GPSGTVKLAK (72 aa)). Composition is skewed to low complexity over residues 102–113 (AAAPKKPAAKKA), 123–137 (KKAA…PKSA), 157–176 (KKAA…APVK), and 203–213 (PKKAATPAKSS).

It belongs to the histone H1/H5 family.

The protein resides in the nucleus. Its subcellular location is the chromosome. In terms of biological role, could act as an H1-type linker histone. This is Histone H1 from Ascobolus immersus.